A 270-amino-acid chain; its full sequence is Phospholipase A and acyltransferase 5 (270 aa).

Disordered stretches follow at residues 1-54 and 70-122; these read MGLS…SASS and RRLE…NPRP. Polar residues-rich tracts occupy residues 24–54 and 100–116; these read TQISKTSSTESSDTQSATGQSTVPHSDSASS and IPTSNSEIESTQKNQAV. The LRAT domain occupies 127 to 240; it reads LIEIFRIGYE…LRYGVPRSQQ (114 aa). Residues His137 and His149 contribute to the active site. Cys224 acts as the Acyl-thioester intermediate in catalysis.

It belongs to the H-rev107 family. In terms of tissue distribution, isoform 4 shows highest expression level in testis.

Its subcellular location is the cytoplasm. The protein localises to the cytosol. The enzyme catalyses a 1,2-diacyl-sn-glycero-3-phosphocholine + H2O = a 1-acyl-sn-glycero-3-phosphocholine + a fatty acid + H(+). It catalyses the reaction a 1,2-diacyl-sn-glycero-3-phosphocholine + H2O = a 2-acyl-sn-glycero-3-phosphocholine + a fatty acid + H(+). It carries out the reaction 1-hexadecanoyl-2-(5Z,8Z,11Z,14Z-eicosatetraenoyl)-sn-glycero-3-phosphocholine + 1,2-di-(9Z-octadecenoyl)-sn-glycero-3-phosphoethanolamine = N-(5Z,8Z,11Z,14Z-eicosatetraenoyl)-1,2-di-(9Z-octadecenoyl)-sn-glycero-3-phosphoethanolamine + 1-hexadecanoyl-sn-glycero-3-phosphocholine + H(+). The catalysed reaction is 1,2-di-(9Z-octadecenoyl)-sn-glycero-3-phosphoethanolamine + 1,2-dihexadecanoyl-sn-glycero-3-phosphocholine = N-hexadecanoyl-1,2-di-(9Z-octadecenoyl)-sn-glycero-3-phosphoethanolamine + 1-hexadecanoyl-sn-glycero-3-phosphocholine + H(+). The enzyme catalyses 1,2-di-(9Z-octadecenoyl)-sn-glycero-3-phosphoethanolamine + 1,2-dihexadecanoyl-sn-glycero-3-phosphocholine = N-hexadecanoyl-1,2-di-(9Z-octadecenoyl)-sn-glycero-3-phosphoethanolamine + 2-hexadecanoyl-sn-glycero-3-phosphocholine + H(+). It catalyses the reaction a 1,2-diacyl-sn-glycero-3-phosphoethanolamine + a 1,2-diacyl-sn-glycero-3-phosphocholine = an N-acyl-1,2-diacyl-sn-glycero-3-phosphoethanolamine + a 1-acyl-sn-glycero-3-phosphocholine + H(+). It carries out the reaction a 1,2-diacyl-sn-glycero-3-phosphoethanolamine + a 1,2-diacyl-sn-glycero-3-phosphocholine = an N-acyl-1,2-diacyl-sn-glycero-3-phosphoethanolamine + a 2-acyl-sn-glycero-3-phosphocholine + H(+). The catalysed reaction is 1-hexadecanoyl-2-(9Z-octadecenoyl)-sn-glycero-3-phosphocholine + 1,2-di-(9Z-octadecenoyl)-sn-glycero-3-phosphoethanolamine = N,1,2-tri-(9Z-octadecenoyl)-sn-glycero-3-phosphoethanolamine + 1-hexadecanoyl-sn-glycero-3-phosphocholine + H(+). Its function is as follows. Exhibits both phospholipase A1/2 and acyltransferase activities. Shows phospholipase A1 (PLA1) and A2 (PLA2) activity, catalyzing the calcium-independent release of fatty acids from the sn-1 or sn-2 position of glycerophospholipids. Shows N-acyltransferase activity, catalyzing the calcium-independent transfer of a fatty acyl group at the sn-1 position of phosphatidylcholine (PC) and other glycerophospholipids to the primary amine of phosphatidylethanolamine (PE), forming N-acylphosphatidylethanolamine (NAPE), which serves as precursor for N-acylethanolamines (NAEs). This Mus musculus (Mouse) protein is Phospholipase A and acyltransferase 5.